The primary structure comprises 211 residues: NADH-quinone oxidoreductase subunit C (211 aa).

Belongs to the complex I 30 kDa subunit family. NDH-1 is composed of 14 different subunits. Subunits NuoB, C, D, E, F, and G constitute the peripheral sector of the complex.

It localises to the cell inner membrane. It carries out the reaction a quinone + NADH + 5 H(+)(in) = a quinol + NAD(+) + 4 H(+)(out). NDH-1 shuttles electrons from NADH, via FMN and iron-sulfur (Fe-S) centers, to quinones in the respiratory chain. The immediate electron acceptor for the enzyme in this species is believed to be ubiquinone. Couples the redox reaction to proton translocation (for every two electrons transferred, four hydrogen ions are translocated across the cytoplasmic membrane), and thus conserves the redox energy in a proton gradient. This is NADH-quinone oxidoreductase subunit C from Azorhizobium caulinodans (strain ATCC 43989 / DSM 5975 / JCM 20966 / LMG 6465 / NBRC 14845 / NCIMB 13405 / ORS 571).